The primary structure comprises 123 residues: Large ribosomal subunit protein uL14 (123 aa).

The protein belongs to the universal ribosomal protein uL14 family. In terms of assembly, part of the 50S ribosomal subunit. Forms a cluster with proteins L3 and L19. In the 70S ribosome, L14 and L19 interact and together make contacts with the 16S rRNA in bridges B5 and B8.

In terms of biological role, binds to 23S rRNA. Forms part of two intersubunit bridges in the 70S ribosome. The protein is Large ribosomal subunit protein uL14 of Hamiltonella defensa subsp. Acyrthosiphon pisum (strain 5AT).